The sequence spans 156 residues: UPF0266 membrane protein YobD (156 aa).

The Periplasmic portion of the chain corresponds to 1–5; that stretch reads MTITD. Residues 6-26 traverse the membrane as a helical segment; sequence LVLILFIAALLAYALYDQFIM. At 27 to 44 the chain is on the cytoplasmic side; sequence PRRNGPTLLSIALLRRGR. Residues 45 to 65 traverse the membrane as a helical segment; that stretch reads VDSVIFVGLVAILIYNNVTSH. Glycine 66 is a topological domain (periplasmic). A helical transmembrane segment spans residues 67–87; that stretch reads AQMTTWLLSALALMGFYIFWI. The Cytoplasmic portion of the chain corresponds to 88 to 156; that stretch reads RTPRIIFKQR…LLIENQYLKI (69 aa).

It belongs to the UPF0266 family.

It is found in the cell inner membrane. The chain is UPF0266 membrane protein YobD (yobD) from Salmonella typhimurium (strain LT2 / SGSC1412 / ATCC 700720).